The chain runs to 273 residues: Probable cysteine-rich repeat secretory protein 6 (273 aa).

A signal peptide spans M1 to S21. 2 consecutive Gnk2-homologous domains span residues Q22–F122 and D128–L241.

Belongs to the cysteine-rich repeat secretory protein family.

Its subcellular location is the secreted. The polypeptide is Probable cysteine-rich repeat secretory protein 6 (CRRSP6) (Arabidopsis thaliana (Mouse-ear cress)).